The chain runs to 898 residues: Magnesium-transporting ATPase, P-type 1 (898 aa).

Over 1–94 the chain is Cytoplasmic; that stretch reads MFKEIFTRLI…QPSPWWVHLW (94 aa). The helical transmembrane segment at 95–115 threads the bilayer; the sequence is VCYRNPFNILLTILGAISYAT. Residue E116 is a topological domain, extracellular. Residues 117–137 traverse the membrane as a helical segment; the sequence is DLFAAGVIALMVAISTLLNFI. Residues 138 to 287 lie on the Cytoplasmic side of the membrane; that stretch reads QEARSTKAAD…PNAFQQGISR (150 aa). Residues 288 to 308 form a helical membrane-spanning segment; sequence VSMLLIRFMLVMAPVVLLING. Residues 309-317 are Extracellular-facing; that stretch reads YTKGDWWEA. The helical transmembrane segment at 318-335 threads the bilayer; the sequence is ALFALSVAVGLTPEMLPM. Position 331 (E331) interacts with Mg(2+). Topologically, residues 336–695 are cytoplasmic; the sequence is IVTSTLARGA…IEGRRTFANM (360 aa). D373 functions as the 4-aspartylphosphate intermediate in the catalytic mechanism. The Mg(2+) site is built by D641, D645, and N709. A helical transmembrane segment spans residues 696 to 715; the sequence is LKYIKMTASSNFGNVFSVLV. The Extracellular segment spans residues 716 to 724; the sequence is ASAFLPFLP. The helical transmembrane segment at 725–744 threads the bilayer; it reads MLPLHLLIQNLLYDVSQVAI. N734 and D738 together coordinate Mg(2+). Residues 745-766 lie on the Cytoplasmic side of the membrane; that stretch reads PFDNVDDEQIQKPQRWNPADLG. Residues 767–790 traverse the membrane as a helical segment; that stretch reads RFMIFFGPISSIFDILTFCLMWWV. Residues 791-799 lie on the Extracellular side of the membrane; sequence FHANTPETQ. Residues 800–818 form a helical membrane-spanning segment; the sequence is TLFQSGWFVVGLLSQTLIV. The Cytoplasmic portion of the chain corresponds to 819–831; the sequence is HMIRTRRVPFIQS. Residues 832-851 traverse the membrane as a helical segment; the sequence is CASWPLMIMTVIVMIVGIAL. Topologically, residues 852 to 866 are extracellular; that stretch reads PFSPLASYLQLQALP. The helical transmembrane segment at 867–886 threads the bilayer; sequence LSYFPWLVAILAGYMTLTQL. Over 887-898 the chain is Cytoplasmic; it reads VKGFYSRRYGWQ.

This sequence belongs to the cation transport ATPase (P-type) (TC 3.A.3) family. Type IIIB subfamily.

The protein localises to the cell inner membrane. The catalysed reaction is Mg(2+)(out) + ATP + H2O = Mg(2+)(in) + ADP + phosphate + H(+). Its function is as follows. Mediates magnesium influx to the cytosol. The chain is Magnesium-transporting ATPase, P-type 1 (mgtA) from Escherichia coli O157:H7.